The sequence spans 476 residues: Protein transport protein Sec61 subunit alpha isoform 2 (476 aa).

Residues 1-32 (MGIKFLEVIKPFCAVLPEIQKPERKIQFREKV) lie on the Cytoplasmic side of the membrane. Residues 33–53 (LWTAITLFIFLVCCQIPLFGI) traverse the membrane as a helical segment. Topologically, residues 54–75 (MSSDSADPFYWMRVILASNRGT) are lumenal. The chain crosses the membrane as a helical span at residues 76 to 96 (LMELGISPIVTSGLIMQLLAG). Topologically, residues 97-117 (AKIIEVGDTPKDRALFNGAQK) are cytoplasmic. Residues 118–138 (LFGMIITIGQAIVYVMTGMYG) traverse the membrane as a helical segment. Residues 139-144 (DPAEMG) are Lumenal-facing. The chain crosses the membrane as a helical span at residues 145–165 (AGICLLIIIQLFVAGLIVLLL). At 166–172 (DELLQKG) the chain is on the cytoplasmic side. The helical transmembrane segment at 173–193 (YGLGSGISLFIATNICETIVW) threads the bilayer. The Lumenal portion of the chain corresponds to 194–240 (KASSPTTINTGRGTEFEGAVIALFHLLATRTDKVRALREAFYRQNLP). A helical membrane pass occupies residues 241–261 (NLMNLIATVFVFAVVIYFQGF). Over 262 to 288 (RVDLPIKSARYRGQYSSYPIKLFYTSN) the chain is Cytoplasmic. A helical membrane pass occupies residues 289–309 (IPIILQSALVSNLYVISQMLS). Residues 310–353 (VRFSGNFLVNLLGQWADVSGGGPARSYPVGGLCYYLSPPESMGA) are Lumenal-facing. A helical membrane pass occupies residues 354–374 (ILEDPVHVVVYIIFMLGSCAF). The Cytoplasmic portion of the chain corresponds to 375–420 (FSKTWIEVSGSSAKDVAKQLKEQQMVMRGHRDTSMVHELNRYIPTA). The next 2 helical transmembrane spans lie at 421-441 (AAFG…LGAI) and 442-462 (GSGT…EIFV). Residues 463-476 (KEQAEVGGMGALFF) lie on the Cytoplasmic side of the membrane.

Belongs to the SecY/SEC61-alpha family. As to quaternary structure, the SEC61 channel-forming translocon complex consists of channel-forming core components SEC61A1, SEC61B and SEC61G and different auxiliary components such as SEC62 and SEC63.

Its subcellular location is the endoplasmic reticulum membrane. In terms of biological role, component of SEC61 channel-forming translocon complex that mediates transport of signal peptide-containing precursor polypeptides across the endoplasmic reticulum (ER). Forms a ribosome receptor and a gated pore in the ER membrane, both functions required for cotranslational translocation of nascent polypeptides. The polypeptide is Protein transport protein Sec61 subunit alpha isoform 2 (SEC61A2) (Pongo abelii (Sumatran orangutan)).